Reading from the N-terminus, the 238-residue chain is Probable phosphatase phospho2 (238 aa).

Aspartate 8 functions as the Nucleophile in the catalytic mechanism. Mg(2+) contacts are provided by aspartate 8 and aspartate 10. The Proton donor role is filled by aspartate 10. The substrate site is built by aspartate 19 and aspartate 99. Position 179 (aspartate 179) interacts with Mg(2+).

The protein belongs to the HAD-like hydrolase superfamily. PHOSPHO family. Mg(2+) serves as cofactor.

Its function is as follows. Probable phosphatase. The polypeptide is Probable phosphatase phospho2 (phospho2) (Xenopus tropicalis (Western clawed frog)).